The following is an 801-amino-acid chain: Elongation factor G, mitochondrial (801 aa).

Residues 1–65 constitute a mitochondrion transit peptide; it reads MRVQSLLRAQ…QKIQNQRRWQ (65 aa). One can recognise a tr-type G domain in the interval 100–387; it reads SRVRNIGIAA…AVCDYLPNPS (288 aa). Residues 109 to 116, 185 to 189, and 239 to 242 contribute to the GTP site; these read AHIDSGKT, DTPGH, and NKMD.

It belongs to the TRAFAC class translation factor GTPase superfamily. Classic translation factor GTPase family. EF-G/EF-2 subfamily.

It localises to the mitochondrion. Its pathway is protein biosynthesis; polypeptide chain elongation. Functionally, mitochondrial GTPase that catalyzes the GTP-dependent ribosomal translocation step during translation elongation. During this step, the ribosome changes from the pre-translocational (PRE) to the post-translocational (POST) state as the newly formed A-site-bound peptidyl-tRNA and P-site-bound deacylated tRNA move to the P and E sites, respectively. Catalyzes the coordinated movement of the two tRNA molecules, the mRNA and conformational changes in the ribosome. The chain is Elongation factor G, mitochondrial (mef1) from Pyrenophora tritici-repentis (strain Pt-1C-BFP) (Wheat tan spot fungus).